The primary structure comprises 226 residues: Large ribosomal subunit protein uL1 (226 aa).

This sequence belongs to the universal ribosomal protein uL1 family. As to quaternary structure, part of the 50S ribosomal subunit.

Its function is as follows. Binds directly to 23S rRNA. The L1 stalk is quite mobile in the ribosome, and is involved in E site tRNA release. In terms of biological role, protein L1 is also a translational repressor protein, it controls the translation of the L11 operon by binding to its mRNA. This Mycoplasma pneumoniae (strain ATCC 29342 / M129 / Subtype 1) (Mycoplasmoides pneumoniae) protein is Large ribosomal subunit protein uL1.